Reading from the N-terminus, the 156-residue chain is Deoxyuridine 5'-triphosphate nucleotidohydrolase (156 aa).

Belongs to the dCTP deaminase family. Archaeal dUTPase subfamily. In terms of assembly, homotrimer.

It catalyses the reaction dUTP + H2O = dUMP + diphosphate + H(+). Its pathway is pyrimidine metabolism; dUMP biosynthesis; dUMP from dCTP (dUTP route): step 2/2. This enzyme is involved in nucleotide metabolism: it produces dUMP, the immediate precursor of thymidine nucleotides and it decreases the intracellular concentration of dUTP so that uracil cannot be incorporated into DNA. The protein is Deoxyuridine 5'-triphosphate nucleotidohydrolase of Methanocaldococcus jannaschii (strain ATCC 43067 / DSM 2661 / JAL-1 / JCM 10045 / NBRC 100440) (Methanococcus jannaschii).